The following is a 240-amino-acid chain: Sugar fermentation stimulation protein homolog (240 aa).

Belongs to the SfsA family.

The polypeptide is Sugar fermentation stimulation protein homolog (Methanothermobacter thermautotrophicus (strain ATCC 29096 / DSM 1053 / JCM 10044 / NBRC 100330 / Delta H) (Methanobacterium thermoautotrophicum)).